Consider the following 119-residue polypeptide: Ribosome-binding factor A (119 aa).

The protein belongs to the RbfA family. Monomer. Binds 30S ribosomal subunits, but not 50S ribosomal subunits or 70S ribosomes.

The protein localises to the cytoplasm. Its function is as follows. One of several proteins that assist in the late maturation steps of the functional core of the 30S ribosomal subunit. Associates with free 30S ribosomal subunits (but not with 30S subunits that are part of 70S ribosomes or polysomes). Required for efficient processing of 16S rRNA. May interact with the 5'-terminal helix region of 16S rRNA. The chain is Ribosome-binding factor A from Buchnera aphidicola subsp. Acyrthosiphon pisum (strain Tuc7).